We begin with the raw amino-acid sequence, 201 residues long: Coat protein (201 aa).

It belongs to the potexvirus capsid protein family.

It is found in the virion. Functionally, required for genome encapsidation. Forms ribonucleoprotein complexes along with TGB1 helicase and viral RNA. The sequence is that of Coat protein from Lilium formosanum.